The following is a 579-amino-acid chain: Arginine--tRNA ligase (579 aa).

The short motif at 128-138 (PNLAKEMHVGH) is the 'HIGH' region element.

It belongs to the class-I aminoacyl-tRNA synthetase family. As to quaternary structure, monomer.

Its subcellular location is the cytoplasm. The catalysed reaction is tRNA(Arg) + L-arginine + ATP = L-arginyl-tRNA(Arg) + AMP + diphosphate. The sequence is that of Arginine--tRNA ligase from Pseudomonas syringae pv. syringae (strain B728a).